Reading from the N-terminus, the 1400-residue chain is DNA-directed RNA polymerase subunit beta' (1400 aa).

Zn(2+)-binding residues include C71, C73, C86, and C89. Residues D462, D464, and D466 each contribute to the Mg(2+) site. Residues C811, C885, C892, and C895 each contribute to the Zn(2+) site.

It belongs to the RNA polymerase beta' chain family. In terms of assembly, the RNAP catalytic core consists of 2 alpha, 1 beta, 1 beta' and 1 omega subunit. When a sigma factor is associated with the core the holoenzyme is formed, which can initiate transcription. The cofactor is Mg(2+). It depends on Zn(2+) as a cofactor.

The enzyme catalyses RNA(n) + a ribonucleoside 5'-triphosphate = RNA(n+1) + diphosphate. Its function is as follows. DNA-dependent RNA polymerase catalyzes the transcription of DNA into RNA using the four ribonucleoside triphosphates as substrates. The sequence is that of DNA-directed RNA polymerase subunit beta' from Brucella suis (strain ATCC 23445 / NCTC 10510).